A 276-amino-acid polypeptide reads, in one-letter code: uncharacterized protein (276 aa).

The region spanning 20–137 is the AB hydrolase-1 domain; that stretch reads PVLIFIPGAN…PPINTFLPDS (118 aa). Positions 57–76 are disordered; sequence GESELTEPLPDSASNPDSDY.

It belongs to the AB hydrolase superfamily.

This is an uncharacterized protein from Staphylococcus aureus (strain bovine RF122 / ET3-1).